A 136-amino-acid chain; its full sequence is UPF0216 protein PH0358 (136 aa).

The protein belongs to the UPF0216 family.

In Pyrococcus horikoshii (strain ATCC 700860 / DSM 12428 / JCM 9974 / NBRC 100139 / OT-3), this protein is UPF0216 protein PH0358.